The primary structure comprises 92 residues: Acylphosphatase (92 aa).

An Acylphosphatase-like domain is found at 3 to 90; the sequence is RVHVLVAGRV…GEFTEFAVLR (88 aa). Residues arginine 18 and asparagine 36 contribute to the active site.

It belongs to the acylphosphatase family.

The catalysed reaction is an acyl phosphate + H2O = a carboxylate + phosphate + H(+). The protein is Acylphosphatase (acyP) of Methylococcus capsulatus (strain ATCC 33009 / NCIMB 11132 / Bath).